We begin with the raw amino-acid sequence, 329 residues long: tRNA (guanine(10)-N2)-dimethyltransferase (329 aa).

Positions 40–143 (NVENVEIFER…KLWIGIRIRE (104 aa)) constitute a THUMP domain.

This sequence belongs to the methyltransferase superfamily. Trm-G10 family. In terms of assembly, monomer.

It is found in the cytoplasm. It catalyses the reaction guanosine(10) in tRNA + 2 S-adenosyl-L-methionine = N(2)-dimethylguanosine(10) in tRNA + 2 S-adenosyl-L-homocysteine + 2 H(+). Functionally, catalyzes the adenosylmethionine-dependent methylation of the exocyclic amino group (N(2)) of guanosine at position 10 of various tRNAs. Acts via a two-step process that leads to the formation of either N(2)-monomethyl (m(2)G) or N(2)-dimethylguanosine (m(2)(2)G). In Pyrococcus abyssi (strain GE5 / Orsay), this protein is tRNA (guanine(10)-N2)-dimethyltransferase (trmG10).